The chain runs to 420 residues: Mannose-1-phosphate guanylyltransferase regulatory subunit alpha (420 aa).

Positions 2–251 (LKAVILIGGP…DGIWSQIKSA (250 aa)) are substrate-binding domain. 2 residues coordinate GDP-alpha-D-mannose: Glu-85 and Gln-247. The hexapeptide repeat domain stretch occupies residues 273-420 (LARHTAGGPR…SRSFTNQIIL (148 aa)). A C-loop region spans residues 356–384 (TPNDPNPNDPRARMDSESLFKDGKLLPAI).

Belongs to the transferase hexapeptide repeat family. As to quaternary structure, component of the GMPPA-GMPPB mannose-1-phosphate guanylyltransferase complex composed of 4 GMPPA subunits and 8 GMPPB subunits; the complex is organized into three layers, a central layer made up of 2 GMPPA dimers sandwiched between two layers each made up of 2 GMPPB dimers.

Its subcellular location is the cytoplasm. Functionally, regulatory subunit of the GMPPA-GMPPB mannose-1-phosphate guanylyltransferase complex; reduces the catalytic activity of GMPPB when part of the complex. Mediates allosteric feedback inhibition of GMPPB catalytic activity upon binding GDP-alpha-D-mannose. Together with GMPPB regulates GDP-alpha-D-mannose levels. This is Mannose-1-phosphate guanylyltransferase regulatory subunit alpha (Gmppa) from Rattus norvegicus (Rat).